The chain runs to 476 residues: Lactate utilization protein B (476 aa).

4Fe-4S ferredoxin-type domains follow at residues 304–334 and 353–382; these read GTEF…GHSY and YDDY…LHEL. Residues C313, C316, C319, C323, C366, C369, and C373 each contribute to the [4Fe-4S] cluster site. A disordered region spans residues 440-476; sequence KGPGPLKAWTESREFPAPSKERFRDWFQTRQKGGNPS. Positions 449 to 466 are enriched in basic and acidic residues; that stretch reads TESREFPAPSKERFRDWF. Residues 467 to 476 show a composition bias toward polar residues; the sequence is QTRQKGGNPS.

The protein belongs to the LutB/YkgF family.

Its function is as follows. Is involved in L-lactate degradation and allows cells to grow with lactate as the sole carbon source. Has probably a role as an electron transporter during oxidation of L-lactate. The chain is Lactate utilization protein B from Geobacillus kaustophilus (strain HTA426).